The primary structure comprises 91 residues: Small ribosomal subunit protein uS19 (91 aa).

Belongs to the universal ribosomal protein uS19 family.

Its function is as follows. Protein S19 forms a complex with S13 that binds strongly to the 16S ribosomal RNA. The protein is Small ribosomal subunit protein uS19 of Ralstonia pickettii (strain 12J).